The primary structure comprises 295 residues: Nitrogenase iron protein (295 aa).

11–18 serves as a coordination point for ATP; that stretch reads GKGGIGKS. Residue Cys99 coordinates [4Fe-4S] cluster. Arg102 bears the ADP-ribosylarginine; by dinitrogenase reductase ADP-ribosyltransferase mark. Cys133 contacts [4Fe-4S] cluster.

Belongs to the NifH/BchL/ChlL family. Homodimer. It depends on [4Fe-4S] cluster as a cofactor. Post-translationally, the reversible ADP-ribosylation of Arg-102 inactivates the nitrogenase reductase and regulates nitrogenase activity.

It catalyses the reaction N2 + 8 reduced [2Fe-2S]-[ferredoxin] + 16 ATP + 16 H2O = H2 + 8 oxidized [2Fe-2S]-[ferredoxin] + 2 NH4(+) + 16 ADP + 16 phosphate + 6 H(+). Functionally, the key enzymatic reactions in nitrogen fixation are catalyzed by the nitrogenase complex, which has 2 components: the iron protein and the molybdenum-iron protein. The protein is Nitrogenase iron protein of Zymomonas mobilis subsp. mobilis (strain ATCC 31821 / ZM4 / CP4).